We begin with the raw amino-acid sequence, 299 residues long: Glycine--tRNA ligase alpha subunit (299 aa).

This sequence belongs to the class-II aminoacyl-tRNA synthetase family. Tetramer of two alpha and two beta subunits.

It localises to the cytoplasm. The enzyme catalyses tRNA(Gly) + glycine + ATP = glycyl-tRNA(Gly) + AMP + diphosphate. The protein is Glycine--tRNA ligase alpha subunit of Dictyoglomus thermophilum (strain ATCC 35947 / DSM 3960 / H-6-12).